The primary structure comprises 338 residues: Probable family 20 transposase (338 aa).

This sequence belongs to the transposase 20 family.

In terms of biological role, required for the transposition of an insertion element. This chain is Probable family 20 transposase, found in Pseudomonas aeruginosa (strain ATCC 15692 / DSM 22644 / CIP 104116 / JCM 14847 / LMG 12228 / 1C / PRS 101 / PAO1).